Consider the following 87-residue polypeptide: Class II metallothionein-like protein 1A (87 aa).

The protein belongs to the metallothionein superfamily. Type 15 family. As to expression, expressed in developing seeds.

Functionally, metallothioneins have a high content of cysteine residues that bind various heavy metals. The chain is Class II metallothionein-like protein 1A (MT21A) from Oryza sativa subsp. japonica (Rice).